Here is a 200-residue protein sequence, read N- to C-terminus: Ependymin-related protein 1 (200 aa).

Positions 1-17 (MILQAALFLAGLTVVSG) are cleaved as a signal peptide. Residues Asn-36, Asn-124, and Asn-136 are each glycosylated (N-linked (GlcNAc...) asparagine).

Belongs to the ependymin family. Component of the acid-soluble and acid-insoluble organic matrix of prismatic shell layers (at protein level). Expressed discontinuously in the anterior zone of the outer fold of the mantle where its expression correlates with shell pigmentation.

It is found in the secreted. The chain is Ependymin-related protein 1 from Haliotis asinina (Donkey's ear abalone).